A 497-amino-acid polypeptide reads, in one-letter code: Glycerol kinase (497 aa).

T12 contacts ADP. The ATP site is built by T12, T13, and S14. Residue T12 participates in sn-glycerol 3-phosphate binding. Residue R16 participates in ADP binding. Residues R82, E83, Y134, and D243 each coordinate sn-glycerol 3-phosphate. Glycerol-binding residues include R82, E83, Y134, D243, and Q244. 2 residues coordinate ADP: T265 and G308. Positions 265, 308, 312, and 411 each coordinate ATP. Residue G411 participates in ADP binding.

Belongs to the FGGY kinase family.

It catalyses the reaction glycerol + ATP = sn-glycerol 3-phosphate + ADP + H(+). It participates in polyol metabolism; glycerol degradation via glycerol kinase pathway; sn-glycerol 3-phosphate from glycerol: step 1/1. With respect to regulation, inhibited by fructose 1,6-bisphosphate (FBP). Its function is as follows. Key enzyme in the regulation of glycerol uptake and metabolism. Catalyzes the phosphorylation of glycerol to yield sn-glycerol 3-phosphate. The chain is Glycerol kinase from Allorhizobium ampelinum (strain ATCC BAA-846 / DSM 112012 / S4) (Agrobacterium vitis (strain S4)).